Here is a 353-residue protein sequence, read N- to C-terminus: Heat-inducible transcription repressor HrcA (353 aa).

It belongs to the HrcA family.

Functionally, negative regulator of class I heat shock genes (grpE-dnaK-dnaJ and groELS operons). Prevents heat-shock induction of these operons. In Synechococcus elongatus (strain ATCC 33912 / PCC 7942 / FACHB-805) (Anacystis nidulans R2), this protein is Heat-inducible transcription repressor HrcA.